Consider the following 152-residue polypeptide: Small ribosomal subunit protein uS15 (152 aa).

Basic residues predominate over residues 1–19 (MAKMHTRRKGRSRSTRPVR). The disordered stretch occupies residues 1 to 21 (MAKMHTRRKGRSRSTRPVRKT).

This sequence belongs to the universal ribosomal protein uS15 family. In terms of assembly, part of the 30S ribosomal subunit.

In Methanocella arvoryzae (strain DSM 22066 / NBRC 105507 / MRE50), this protein is Small ribosomal subunit protein uS15.